The following is a 498-amino-acid chain: Protein WHAT'S THIS FACTOR 1, chloroplastic (498 aa).

The N-terminal 50 residues, 1–50 (MDAKLLLPFPFAPAAATRSPKSLFLGAPLPPPPRPPPFPLRLRPRPAAVV), are a transit peptide targeting the chloroplast. A PORR domain is found at 59 to 387 (KEAPFDTVIQ…LKEKMRALVA (329 aa)). Disordered regions lie at residues 397 to 427 (VGTG…EDEG) and 446 to 498 (DYEW…RERW). Acidic residues-rich tracts occupy residues 417–427 (SDEEYDDEDEG) and 456–466 (ENDDSPPDFGD).

Its subcellular location is the plastid. The protein resides in the chloroplast. RNA-binding protein involved in the chloroplastic group II intron splicing. Binds specific group II introns and promotes their splicing. Functions in the context of a heterodimer with the ribonuclease III domain-containing protein RNC1. In Zea mays (Maize), this protein is Protein WHAT'S THIS FACTOR 1, chloroplastic.